Here is a 213-residue protein sequence, read N- to C-terminus: Putative manganese efflux pump MntP (213 aa).

The next 6 helical transmembrane spans lie at 3–23 (ILSI…VSVA), 36–56 (ALKV…IGWG), 67–87 (AFDH…MIFE), 130–150 (LAIA…FLGI), 152–172 (IVQT…LGVI), and 187–207 (IVGG…HTGI).

This sequence belongs to the MntP (TC 9.B.29) family.

The protein localises to the cell membrane. Its function is as follows. Probably functions as a manganese efflux pump. The protein is Putative manganese efflux pump MntP of Clostridium perfringens (strain 13 / Type A).